The following is a 754-amino-acid chain: MTILTHTLGFPRVGLRRELKKAQESYWAGNTTREALLAVGRELRARHWEQQKQAGIDLLPVGDFAWYDHVLTTSLLLGNVPARHQNNDGSVDIDTLFRIGRGRAPTGEPAAAAEMTKWFNTNYHYIVPEFSKGQQFRLTWTQLLEEVDEALALGHKIKPVLLGPVTYLWLGKVKGEPFDRLTLLKDILPVYQHVLAELAKRGVEWVQIDEPALVLELPQAWLDAFKPAYDALAGQVKLLLTTYFEGVTPNLDTIIVLPVQGLHVDLIHGKDDVVELHQRLPVDWLLSAGLINGRNVWRADLTEKYAQINAIVGKRALWVASSCSLLHSPIDLSVETRLDTEVKSWFAFALQKCGELALLRDALNSGETAALEEWSVPIQARRHSHRVHNAAVEKRLAAITAQDSQRENPYEVRAEAQRARFKLPAWPTTTIGSFPQTTEIRGLRLDFKKGNLDANNYRTGIAEHIKQAIIEQERLGLDVLVHGEAERNDMVEYFGEHLDGFVFTQNGWVQSYGSRCVKPPVVIGDISRPAPITVEWAKYAQSLTDKPVKGMLTGPVTILCWSFPREDVTRETIAKQIALALRDEVADLEAAGIGIIQIDEPALREGLPLRRSDWDAYLEWGVEAFRINAAVAKDETQIHTHMCYCEFNDIMDSIAALDADVITIETSRSDMELLESFEAFDYPNEIGPGVYDIHSPNVPSVEWIEALLKKAAQRIPAQRLWVNPDCGLKTRGWPETRAALANMVKAAHNLRQAK.

Residues 17 to 20 (RELK) and K117 contribute to the 5-methyltetrahydropteroyltri-L-glutamate site. Residues 431–433 (IGS) and E484 contribute to the L-homocysteine site. L-methionine-binding positions include 431–433 (IGS) and E484. Residues 515–516 (RC) and W561 each bind 5-methyltetrahydropteroyltri-L-glutamate. D599 contacts L-homocysteine. D599 provides a ligand contact to L-methionine. Residue E605 coordinates 5-methyltetrahydropteroyltri-L-glutamate. Zn(2+) is bound by residues H641, C643, and E665. The Proton donor role is filled by H694. C726 serves as a coordination point for Zn(2+).

The protein belongs to the vitamin-B12 independent methionine synthase family. It depends on Zn(2+) as a cofactor.

It catalyses the reaction 5-methyltetrahydropteroyltri-L-glutamate + L-homocysteine = tetrahydropteroyltri-L-glutamate + L-methionine. It functions in the pathway amino-acid biosynthesis; L-methionine biosynthesis via de novo pathway; L-methionine from L-homocysteine (MetE route): step 1/1. Functionally, catalyzes the transfer of a methyl group from 5-methyltetrahydrofolate to homocysteine resulting in methionine formation. The sequence is that of 5-methyltetrahydropteroyltriglutamate--homocysteine methyltransferase from Salmonella typhi.